Consider the following 332-residue polypeptide: Beta-ketoacyl-[acyl-carrier-protein] synthase III 2 (332 aa).

Catalysis depends on residues Cys-115 and His-252. An ACP-binding region spans residues 253–257 (SANLR). Asn-282 is an active-site residue.

The protein belongs to the thiolase-like superfamily. FabH family. As to quaternary structure, homodimer.

Its subcellular location is the cytoplasm. It catalyses the reaction malonyl-[ACP] + acetyl-CoA + H(+) = 3-oxobutanoyl-[ACP] + CO2 + CoA. The protein operates within lipid metabolism; fatty acid biosynthesis. Its function is as follows. Catalyzes the condensation reaction of fatty acid synthesis by the addition to an acyl acceptor of two carbons from malonyl-ACP. Catalyzes the first condensation reaction which initiates fatty acid synthesis and may therefore play a role in governing the total rate of fatty acid production. Possesses both acetoacetyl-ACP synthase and acetyl transacylase activities. Its substrate specificity determines the biosynthesis of branched-chain and/or straight-chain of fatty acids. The protein is Beta-ketoacyl-[acyl-carrier-protein] synthase III 2 of Halalkalibacterium halodurans (strain ATCC BAA-125 / DSM 18197 / FERM 7344 / JCM 9153 / C-125) (Bacillus halodurans).